Here is a 423-residue protein sequence, read N- to C-terminus: 3-isopropylmalate dehydratase large subunit 1 (423 aa).

[4Fe-4S] cluster-binding residues include Cys302, Cys362, and Cys365.

The protein belongs to the aconitase/IPM isomerase family. LeuC type 2 subfamily. As to quaternary structure, heterodimer of LeuC and LeuD. [4Fe-4S] cluster serves as cofactor.

The enzyme catalyses (2R,3S)-3-isopropylmalate = (2S)-2-isopropylmalate. Its pathway is amino-acid biosynthesis; L-leucine biosynthesis; L-leucine from 3-methyl-2-oxobutanoate: step 2/4. In terms of biological role, catalyzes the isomerization between 2-isopropylmalate and 3-isopropylmalate, via the formation of 2-isopropylmaleate. This chain is 3-isopropylmalate dehydratase large subunit 1, found in Pyrococcus abyssi (strain GE5 / Orsay).